Here is a 298-residue protein sequence, read N- to C-terminus: N-acetylmuramic acid 6-phosphate etherase (298 aa).

One can recognise an SIS domain in the interval 55 to 218; that stretch reads IHAQVSGGGR…STGLMIKSGK (164 aa). Glu83 serves as the catalytic Proton donor. Residue Glu114 is part of the active site.

The protein belongs to the GCKR-like family. MurNAc-6-P etherase subfamily. In terms of assembly, homodimer.

It catalyses the reaction N-acetyl-D-muramate 6-phosphate + H2O = N-acetyl-D-glucosamine 6-phosphate + (R)-lactate. The protein operates within amino-sugar metabolism; 1,6-anhydro-N-acetylmuramate degradation. It participates in amino-sugar metabolism; N-acetylmuramate degradation. It functions in the pathway cell wall biogenesis; peptidoglycan recycling. In terms of biological role, specifically catalyzes the cleavage of the D-lactyl ether substituent of MurNAc 6-phosphate, producing GlcNAc 6-phosphate and D-lactate. Together with AnmK, is also required for the utilization of anhydro-N-acetylmuramic acid (anhMurNAc) either imported from the medium or derived from its own cell wall murein, and thus plays a role in cell wall recycling. This Escherichia coli O81 (strain ED1a) protein is N-acetylmuramic acid 6-phosphate etherase.